The primary structure comprises 341 residues: Phenylalanine--tRNA ligase alpha subunit (341 aa).

Glutamate 254 contacts Mg(2+).

Belongs to the class-II aminoacyl-tRNA synthetase family. Phe-tRNA synthetase alpha subunit type 1 subfamily. In terms of assembly, tetramer of two alpha and two beta subunits. It depends on Mg(2+) as a cofactor.

It localises to the cytoplasm. It carries out the reaction tRNA(Phe) + L-phenylalanine + ATP = L-phenylalanyl-tRNA(Phe) + AMP + diphosphate + H(+). This Chlorobaculum parvum (strain DSM 263 / NCIMB 8327) (Chlorobium vibrioforme subsp. thiosulfatophilum) protein is Phenylalanine--tRNA ligase alpha subunit.